An 87-amino-acid polypeptide reads, in one-letter code: Type 3 secretion system needle filament protein (87 aa).

This sequence belongs to the SctF family. The core secretion machinery of the T3SS is composed of approximately 20 different proteins, including cytoplasmic components, a base, an export apparatus and a needle. This subunit polymerizes and forms the helical needle filament. In Y.enterocolitica E40, the needles are composed of 139 (plus-minus 19) YscF/SctF subunits.

Its subcellular location is the secreted. It is found in the cell surface. Its activity is regulated as follows. The secretion and/or polymerization may be controlled by the type III secretion system regulator YopR. In terms of biological role, component of the type III secretion system (T3SS), also called injectisome, which is used to inject bacterial effector proteins into eukaryotic host cells. YscF/SctF forms the external needle filament that protrudes from the bacterial surface. The needle is not sufficient by itself for the formation of a pore allowing translocation of the Yop effectors across the host cell membrane. This Yersinia enterocolitica protein is Type 3 secretion system needle filament protein.